A 167-amino-acid chain; its full sequence is Transcription factor 24 (167 aa).

Residues 1 to 23 (MDRGRPAGSPLSASAEPAPLAAA) show a composition bias toward low complexity. Residues 1-60 (MDRGRPAGSPLSASAEPAPLAAAIRDSRPGRTGPGPAGPGGGSRSGSGRPAAANAARERS) form a disordered region. Residues 32 to 45 (TGPGPAGPGGGSRS) are compositionally biased toward gly residues. The span at 46–55 (GSGRPAAANA) shows a compositional bias: low complexity. Residues 49–101 (RPAAANAARERSRVQTLRHAFLELQRTLPSVPPDTKLSKLDVLLLATTYIAHL) enclose the bHLH domain.

As to quaternary structure, efficient DNA binding requires dimerization with another bHLH protein.

The protein localises to the nucleus. Putative transcription factor. The sequence is that of Transcription factor 24 (TCF24) from Homo sapiens (Human).